A 144-amino-acid chain; its full sequence is D-aminoacyl-tRNA deacylase (144 aa).

The Gly-cisPro motif, important for rejection of L-amino acids motif lies at 136–137 (GP).

It belongs to the DTD family. Homodimer.

The protein localises to the cytoplasm. The catalysed reaction is glycyl-tRNA(Ala) + H2O = tRNA(Ala) + glycine + H(+). It carries out the reaction a D-aminoacyl-tRNA + H2O = a tRNA + a D-alpha-amino acid + H(+). In terms of biological role, an aminoacyl-tRNA editing enzyme that deacylates mischarged D-aminoacyl-tRNAs. Also deacylates mischarged glycyl-tRNA(Ala), protecting cells against glycine mischarging by AlaRS. Acts via tRNA-based rather than protein-based catalysis; rejects L-amino acids rather than detecting D-amino acids in the active site. By recycling D-aminoacyl-tRNA to D-amino acids and free tRNA molecules, this enzyme counteracts the toxicity associated with the formation of D-aminoacyl-tRNA entities in vivo and helps enforce protein L-homochirality. This is D-aminoacyl-tRNA deacylase from Haemophilus ducreyi (strain 35000HP / ATCC 700724).